Consider the following 409-residue polypeptide: FADH(2)-dependent resorcinol hydroxylase, oxygenase component (409 aa).

The protein belongs to the HpaH/HsaA monooxygenase family. The FADH(2)-dependent resorcinol hydroxylase is composed of two subunits, GraA (the oxygenase component) and GraD (the reductase component). Both subunits are required for activity.

The catalysed reaction is resorcinol + FADH2 + O2 = benzene-1,2,4-triol + FAD + H2O + H(+). Its pathway is aromatic compound metabolism. Functionally, involved in the gamma-resorcylate (2,6-dihydroxybenzoate) catabolism. Oxygenase component of the resorcinol hydroxylase, which catalyzes the FADH(2)-dependent conversion of resorcinol to hydroxyquinol. The chain is FADH(2)-dependent resorcinol hydroxylase, oxygenase component from Rhizobium sp. (strain MTP-10005).